The following is a 615-amino-acid chain: Protein PSK SIMULATOR 2 (615 aa).

Gly2 is lipidated: N-myristoyl glycine. The span at 16 to 27 (KKLRSNDDDKSR) shows a compositional bias: basic and acidic residues. Disordered regions lie at residues 16–59 (KKLR…KSSK) and 506–529 (AHGV…SNTQ). The segment covering 42–52 (SDSYYSDNYGG) has biased composition (low complexity). The segment covering 512–529 (QETNHVSPPNNRTISNTQ) has biased composition (polar residues).

The protein resides in the nucleus. In terms of biological role, promotes seedling growth probably via the regulation of phytosulfokine (PSK) signaling; PSK are peptide phytohormones acting as growth factors. Involved in PSK-induced root growth. Together with PSI1 and PSI3, required during vegetative growth and reproduction. The sequence is that of Protein PSK SIMULATOR 2 from Arabidopsis thaliana (Mouse-ear cress).